The primary structure comprises 213 residues: High frequency lysogenization protein HflD homolog (213 aa).

It belongs to the HflD family.

The protein resides in the cytoplasm. It localises to the cell inner membrane. This chain is High frequency lysogenization protein HflD homolog, found in Nitrosococcus oceani (strain ATCC 19707 / BCRC 17464 / JCM 30415 / NCIMB 11848 / C-107).